Consider the following 103-residue polypeptide: Urease subunit gamma (103 aa).

The protein belongs to the urease gamma subunit family. In terms of assembly, heterotrimer of UreA (gamma), UreB (beta) and UreC (alpha) subunits. Three heterotrimers associate to form the active enzyme.

Its subcellular location is the cytoplasm. The catalysed reaction is urea + 2 H2O + H(+) = hydrogencarbonate + 2 NH4(+). It participates in nitrogen metabolism; urea degradation; CO(2) and NH(3) from urea (urease route): step 1/1. The protein is Urease subunit gamma of Paracoccus denitrificans (strain Pd 1222).